The following is a 484-amino-acid chain: Aspartyl/glutamyl-tRNA(Asn/Gln) amidotransferase subunit B (484 aa).

Belongs to the GatB/GatE family. GatB subfamily. As to quaternary structure, heterotrimer of A, B and C subunits.

The enzyme catalyses L-glutamyl-tRNA(Gln) + L-glutamine + ATP + H2O = L-glutaminyl-tRNA(Gln) + L-glutamate + ADP + phosphate + H(+). It catalyses the reaction L-aspartyl-tRNA(Asn) + L-glutamine + ATP + H2O = L-asparaginyl-tRNA(Asn) + L-glutamate + ADP + phosphate + 2 H(+). Functionally, allows the formation of correctly charged Asn-tRNA(Asn) or Gln-tRNA(Gln) through the transamidation of misacylated Asp-tRNA(Asn) or Glu-tRNA(Gln) in organisms which lack either or both of asparaginyl-tRNA or glutaminyl-tRNA synthetases. The reaction takes place in the presence of glutamine and ATP through an activated phospho-Asp-tRNA(Asn) or phospho-Glu-tRNA(Gln). The polypeptide is Aspartyl/glutamyl-tRNA(Asn/Gln) amidotransferase subunit B (Anaeromyxobacter dehalogenans (strain 2CP-1 / ATCC BAA-258)).